The chain runs to 1790 residues: Vitellogenin (1790 aa).

An N-terminal signal peptide occupies residues 1-19 (MWSTVALCLLVGLSYVSSS). One can recognise a Vitellogenin domain in the interval 23–799 (WKDNTEYVYS…SAESSFPKIM (777 aa)). Asn219 and Asn297 each carry an N-linked (GlcNAc...) asparagine glycan. The segment covering 342 to 353 (LMEDSSSEESSE) has biased composition (acidic residues). The tract at residues 342–400 (LMEDSSSEESSEQEMTHRRFRRSANSLTKQWRESSEEWNQQQQQPRPQLTRAPHSPLLP) is disordered. Positions 378–389 (EWNQQQQQPRPQ) are enriched in low complexity. N-linked (GlcNAc...) asparagine glycans are attached at residues Asn554, Asn573, Asn893, Asn1345, Asn1416, Asn1430, Asn1480, Asn1699, and Asn1735. Residues 1466–1675 (PTCVIDQTTA…SYQVEKGQQW (210 aa)) form the VWFD domain. A disulfide bridge links Cys1468 with Cys1638.

The protein localises to the secreted. Functionally, precursor of the egg-yolk proteins that are sources of nutrients during embryonic development. The polypeptide is Vitellogenin (VTG) (Anthonomus grandis (Mexican cotton boll weevil)).